The following is a 479-amino-acid chain: Probable cytosol aminopeptidase (479 aa).

Mn(2+)-binding residues include Lys247 and Asp252. The active site involves Lys259. 3 residues coordinate Mn(2+): Asp270, Asp329, and Glu331. Arg333 is an active-site residue.

It belongs to the peptidase M17 family. Mn(2+) is required as a cofactor.

It is found in the cytoplasm. It carries out the reaction Release of an N-terminal amino acid, Xaa-|-Yaa-, in which Xaa is preferably Leu, but may be other amino acids including Pro although not Arg or Lys, and Yaa may be Pro. Amino acid amides and methyl esters are also readily hydrolyzed, but rates on arylamides are exceedingly low.. The enzyme catalyses Release of an N-terminal amino acid, preferentially leucine, but not glutamic or aspartic acids.. Functionally, presumably involved in the processing and regular turnover of intracellular proteins. Catalyzes the removal of unsubstituted N-terminal amino acids from various peptides. In Vesicomyosocius okutanii subsp. Calyptogena okutanii (strain HA), this protein is Probable cytosol aminopeptidase.